Consider the following 118-residue polypeptide: Large ribosomal subunit protein uL18 (118 aa).

The tract at residues 1 to 24 (MISKPDKNKTRQRRHARVRGKISG) is disordered. The span at 10–20 (TRQRRHARVRG) shows a compositional bias: basic residues.

Belongs to the universal ribosomal protein uL18 family. Part of the 50S ribosomal subunit; part of the 5S rRNA/L5/L18/L25 subcomplex. Contacts the 5S and 23S rRNAs.

In terms of biological role, this is one of the proteins that bind and probably mediate the attachment of the 5S RNA into the large ribosomal subunit, where it forms part of the central protuberance. This chain is Large ribosomal subunit protein uL18, found in Lactiplantibacillus plantarum (strain ATCC BAA-793 / NCIMB 8826 / WCFS1) (Lactobacillus plantarum).